Here is a 137-residue protein sequence, read N- to C-terminus: Small ribosomal subunit protein uS12 (137 aa).

The segment at 1 to 57 is disordered; it reads MPTINQLVRKPRKSKVEKPKSPALNVGYNSHKKVQTNVSSPQKRGVATRVGTMTPRK. The residue at position 102 (Asp-102) is a 3-methylthioaspartic acid.

Belongs to the universal ribosomal protein uS12 family. As to quaternary structure, part of the 30S ribosomal subunit. Contacts proteins S8 and S17. May interact with IF1 in the 30S initiation complex.

Functionally, with S4 and S5 plays an important role in translational accuracy. Interacts with and stabilizes bases of the 16S rRNA that are involved in tRNA selection in the A site and with the mRNA backbone. Located at the interface of the 30S and 50S subunits, it traverses the body of the 30S subunit contacting proteins on the other side and probably holding the rRNA structure together. The combined cluster of proteins S8, S12 and S17 appears to hold together the shoulder and platform of the 30S subunit. The polypeptide is Small ribosomal subunit protein uS12 (Streptococcus pneumoniae (strain Hungary19A-6)).